The chain runs to 187 residues: Guanylate kinase (187 aa).

The Guanylate kinase-like domain maps to 5–183 (GRLTVLTGPS…ALKQLETHMQ (179 aa)). 12 to 19 (GPSGVGKG) provides a ligand contact to ATP.

The protein belongs to the guanylate kinase family.

The protein resides in the cytoplasm. The catalysed reaction is GMP + ATP = GDP + ADP. The enzyme catalyses dZMP + ATP = dZDP + ADP. It participates in purine metabolism. Essential for recycling GMP and indirectly, cGMP. Its function is as follows. (Microbial infection) Catalyzes the phosphorylation of dZMP to dZDP, when the bacterium is infected by a phage that produces the substrate for the synthesis of dZTP (2- amino-2'-deoxyadenosine 5'-triphosphate), which is then used by the phage as a DNA polymerase substrate. The sequence is that of Guanylate kinase from Synechococcus sp. (strain CC9902).